The sequence spans 756 residues: Catalase-peroxidase (756 aa).

The N-terminal stretch at 1–26 is a signal peptide; it reads MKGKTVNKQTLAALVSALLVFNPAVA. Residues 126–248 constitute a cross-link (tryptophyl-tyrosyl-methioninium (Trp-Tyr) (with M-274)); that stretch reads WHSAGTYRTL…LGATHMGLIY (123 aa). The Proton acceptor role is filled by His127. A cross-link (tryptophyl-tyrosyl-methioninium (Tyr-Met) (with W-126)) is located at residues 248 to 274; sequence YVNPEGPKGVPDPLGSAKNIRTAFSRM. Heme b is bound at residue His289.

This sequence belongs to the peroxidase family. Peroxidase/catalase subfamily. Homodimer or homotetramer. The cofactor is heme b. Formation of the three residue Trp-Tyr-Met cross-link is important for the catalase, but not the peroxidase activity of the enzyme.

It carries out the reaction H2O2 + AH2 = A + 2 H2O. The catalysed reaction is 2 H2O2 = O2 + 2 H2O. Bifunctional enzyme with both catalase and broad-spectrum peroxidase activity. This Shewanella loihica (strain ATCC BAA-1088 / PV-4) protein is Catalase-peroxidase.